The chain runs to 715 residues: Dynein axonemal intermediate chain 7 (715 aa).

The disordered stretch occupies residues A291–V322. The span at D295 to G318 shows a compositional bias: basic and acidic residues.

This sequence belongs to the DNAI7 family. In terms of assembly, part of the multisubunit axonemal dynein complex formed at least of two heavy chains and a number of intermediate and light chains. Associates with tubulin. Interacts with microtubule. In terms of processing, ubiquitinated. Ubiquitination leads to its degradation through the 26S proteasome. Ubiquitin-proteasome-mediated DNAI7 degradation occurs in mitosis.

It is found in the cell projection. The protein localises to the cilium. It localises to the cytoplasm. In terms of biological role, via its association with the multisubunit axonemal dynein complex, is potentially involved in the regulation of cilia function. May act as a cell cycle regulator. The chain is Dynein axonemal intermediate chain 7 from Bos taurus (Bovine).